The primary structure comprises 82 residues: uncharacterized protein (82 aa).

The Resolvase/invertase-type recombinase catalytic domain occupies 11–82; the sequence is NVGIYVRVST…HIEQGIMTHC (72 aa). The O-(5'-phospho-DNA)-serine intermediate role is filled by Ser-19.

This sequence belongs to the site-specific recombinase resolvase family.

This is an uncharacterized protein from Bacillus phage phi105 (Bacteriophage phi-105).